A 205-amino-acid polypeptide reads, in one-letter code: Retron Vc95 putative HNH endonuclease (205 aa).

Putative HNH endonuclease component of antiviral defense system retron Vc95, composed of a non-coding RNA (ncRNA), a reverse transcriptase (RT), a probable ATP-binding protein and this protein. Expression of retron Vc95 confers protection against bacteriophages T2, T4 and T6. At multiplicity of infection (MOI) of 0.02 cultures slow growth when infected with T4 but do not collapse, at MOI 2 cultures enter growth stasis. In Vibrio cholerae serotype O1 biovar El Tor, this protein is Retron Vc95 putative HNH endonuclease.